Reading from the N-terminus, the 198-residue chain is MSQPVVVIDAKDHLLGRLASTIAKQVLNGQKIVVVRAEALNISGEFFRNKLKYHDFLRKATAFNKTRGPFHFRAPSRILYKAIRGMVSHKTARGKAALERLKIFEGIPPPYDKKKRVVVPQALRVLRLKPGRKYTTLGKLSTSVGWKYEDVVAKLEDKRKVRSAEYYAKKRAFTKKVSSASAAASESDVAKQLASFGY.

Ser-2 carries the N-acetylserine; partial modification. Residue Ser-43 is modified to Phosphoserine. A Glycyl lysine isopeptide (Lys-Gly) (interchain with G-Cter in ubiquitin) cross-link involves residue Lys-176. Ser-181, Ser-185, and Ser-187 each carry phosphoserine.

Belongs to the universal ribosomal protein uL13 family. In terms of assembly, component of the large ribosomal subunit (LSU). Mature yeast ribosomes consist of a small (40S) and a large (60S) subunit. The 40S small subunit contains 1 molecule of ribosomal RNA (18S rRNA) and 33 different proteins (encoded by 57 genes). The large 60S subunit contains 3 rRNA molecules (25S, 5.8S and 5S rRNA) and 46 different proteins (encoded by 81 genes). N-terminally acetylated by acetyltransferase NatA.

Its subcellular location is the cytoplasm. Functionally, component of the ribosome, a large ribonucleoprotein complex responsible for the synthesis of proteins in the cell. The small ribosomal subunit (SSU) binds messenger RNAs (mRNAs) and translates the encoded message by selecting cognate aminoacyl-transfer RNA (tRNA) molecules. The large subunit (LSU) contains the ribosomal catalytic site termed the peptidyl transferase center (PTC), which catalyzes the formation of peptide bonds, thereby polymerizing the amino acids delivered by tRNAs into a polypeptide chain. The nascent polypeptides leave the ribosome through a tunnel in the LSU and interact with protein factors that function in enzymatic processing, targeting, and the membrane insertion of nascent chains at the exit of the ribosomal tunnel. The polypeptide is Large ribosomal subunit protein uL13B (Saccharomyces cerevisiae (strain ATCC 204508 / S288c) (Baker's yeast)).